Consider the following 750-residue polypeptide: Probable methylmalonyl-CoA mutase large subunit (750 aa).

6 residues coordinate (R)-methylmalonyl-CoA: tyrosine 91, methionine 94, threonine 101, arginine 103, tyrosine 105, and serine 130. Cob(II)alamin is bound by residues phenylalanine 133 and alanine 155. (R)-methylmalonyl-CoA contacts are provided by threonine 211 and glutamine 213. The cob(II)alamin site is built by valine 222 and arginine 223. 4 residues coordinate (R)-methylmalonyl-CoA: arginine 223, histidine 260, arginine 299, and serine 301. 11 residues coordinate cob(II)alamin: glycine 349, glutamate 386, alanine 389, glycine 628, histidine 629, aspartate 630, arginine 631, serine 674, leucine 676, glycine 705, and threonine 728. In terms of domain architecture, B12-binding spans 616 to 748 (RPRILIAKMG…HRLAERLGYT (133 aa)).

The protein belongs to the methylmalonyl-CoA mutase family. As to quaternary structure, heterodimer of an alpha and a beta chain. Requires adenosylcob(III)alamin as cofactor.

It catalyses the reaction (R)-methylmalonyl-CoA = succinyl-CoA. Its pathway is metabolic intermediate metabolism; propanoyl-CoA degradation; succinyl-CoA from propanoyl-CoA: step 3/3. Catalyzes the isomerization of succinyl-CoA to methylmalonyl-CoA during synthesis of propionate from tricarboxylic acid-cycle intermediates. In Mycobacterium bovis (strain ATCC BAA-935 / AF2122/97), this protein is Probable methylmalonyl-CoA mutase large subunit (mutB).